Here is a 57-residue protein sequence, read N- to C-terminus: UPF0391 membrane protein RPB_2510 (57 aa).

2 consecutive transmembrane segments (helical) span residues 6–26 (WALI…TGIS) and 35–55 (ILFY…FTIF).

Belongs to the UPF0391 family.

It is found in the cell membrane. The sequence is that of UPF0391 membrane protein RPB_2510 from Rhodopseudomonas palustris (strain HaA2).